The primary structure comprises 641 residues: 1,3-beta-glucanosyltransferase PGA5 (641 aa).

An N-terminal signal peptide occupies residues 1-23; it reads MTTLSTIWLFLITITAIFQLGLS. N-linked (GlcNAc...) asparagine glycosylation occurs at Asn25. A disulfide bond links Cys106 and Cys135. 5 residues coordinate (1,3-beta-D-glucosyl)n: Tyr124, Asn192, Glu193, Asp234, and Arg239. The Proton donor role is filled by Glu193. Intrachain disulfides connect Cys248–Cys390, Cys276–Cys307, Cys424–Cys474, Cys426–Cys528, Cys433–Cys498, and Cys451–Cys456. Glu304 acts as the Nucleophile in catalysis. Tyr336 is a binding site for (1,3-beta-D-glucosyl)n. The segment at 535–613 is disordered; sequence KEEEKEVQEE…SPKTSKSIAG (79 aa). Residues 571–581 show a composition bias toward basic and acidic residues; it reads KSKEKEKGKLI. Residues 582–593 are compositionally biased toward acidic residues; it reads EEEEEEEEEEEE. The span at 596–610 shows a compositional bias: polar residues; that stretch reads KTPSSGEKSPKTSKS. N-linked (GlcNAc...) asparagine glycosylation occurs at Asn621. Asp622 carries GPI-anchor amidated aspartate lipidation. The propeptide at 623 to 641 is removed in mature form; that stretch reads SIWKTFIEILFTCSAAILI.

This sequence belongs to the glycosyl hydrolase 72 family.

It localises to the cell membrane. In terms of biological role, splits internally a 1,3-beta-glucan molecule and transfers the newly generated reducing end (the donor) to the non-reducing end of another 1,3-beta-glucan molecule (the acceptor) forming a 1,3-beta linkage, resulting in the elongation of 1,3-beta-glucan chains in the cell wall. Involved in spore wall assembly. The polypeptide is 1,3-beta-glucanosyltransferase PGA5 (PGA5) (Candida albicans (strain SC5314 / ATCC MYA-2876) (Yeast)).